The sequence spans 180 residues: Chorion protein S19 (180 aa).

A signal peptide spans 1-21 (MNTFATLAVLFCACLIGNCHG).

The protein belongs to the chorion protein S19 family.

It localises to the secreted. Its function is as follows. Chorion membrane (egg shell) protein; plays a role in protecting the egg from the environment. In Drosophila subobscura (Fruit fly), this protein is Chorion protein S19 (Cp19).